Consider the following 309-residue polypeptide: MLGRHECTISESVSALDPTAQEPEYTLVPSTSRDLVRDMTLNMEDAQAHLKEHGWVKIPAVLSKAEAEDALSRLWEAKAASEARGECTFQPILDPNPANVRVFYLPELDAYWRDMLVNPTALDLAKSLLGDQLLVSNFSANIARPGAESMALHSDQSIVLPAPWLDVWAVNVIWCLTRMTKENGATLYIPGSNKWTTWEDVPDNAPDLLVPFEADAGDIVVIDGRLWHTSGSNVTEDEDRAILFAYYSAPHMRPLTNWSAKLPKELQETLSPQLKELLALSHIGYVVKGDLTYMAQKYPSEKGTTAVSA.

Fe cation contacts are provided by H153, D155, and H228.

Belongs to the PhyH family. Requires Fe cation as cofactor.

It carries out the reaction 5-dehydro-6-demethoxyfumagillol + 2-oxoglutarate + O2 = 5-dehydro-6-demethoxy-6-hydroxyfumagillol + succinate + CO2. Its pathway is secondary metabolite biosynthesis; terpenoid biosynthesis. Its function is as follows. Dioxygenase; part of the gene cluster that mediates the biosynthesis of fumagillin, a meroterpenoid that has numerous biological activities including irreversible inhibition of human type 2 methionine aminopeptidase (METAP2). Within the pathway, the dioxygenase af480 acts as a 5-dehydro-6-demethoxyfumagillol dioxygenase that hydroylates 5-keto-demethoxyfumagillol at position C-6. The pathway begins with the conversion of farnesyl pyrophosphate (FPP) to beta-trans-bergamotene by the membrane-bound beta-trans-bergamotene synthase af520. The multifunctional cytochrome P450 monooxygenase af510 then converts beta-trans-bergamotene into 5-keto-demethoxyfumagillol via several oxydation steps. 5-keto-demethoxyfumagillol is then subjected to successive C-6 hydroxylation and O-methylation by the dioxygenase af480 and O-methyltransferase af390-400, respectively, to yield 5-keto-fumagillol, which is then stereoselectively reduced by the keto-reductase af490 to 5R-hydroxy-seco-sesquiterpene. The next step is the polyketide transferase af380-catalyzed transfer of a dodecapentaenoyl group synthesized by the polyketide synthase af370 onto 5R-hydroxy-seco-sesquiterpene which leads to the production of prefumagillin. Finally, oxidative cleavage by the monooxygenase af470 converts prefumagillin to fumagillin. In Aspergillus fumigatus (strain ATCC MYA-4609 / CBS 101355 / FGSC A1100 / Af293) (Neosartorya fumigata), this protein is Dioxygenase af480.